The sequence spans 220 residues: Histone deacetylase complex subunit SAP30 (220 aa).

Residues 1–129 (MNGFTPDEMS…QSVRNRRKRK (129 aa)) form an interaction with NCOR1 region. A Phosphothreonine modification is found at Thr-5. The segment at 67-115 (CCLREDGERCGRAAGNASFSKRIQKSISQKKVKIELDKSARHLYICDYH) adopts an Atypical zinc-finger fold. Residue Lys-87 forms a Glycyl lysine isopeptide (Lys-Gly) (interchain with G-Cter in SUMO2) linkage. Residues 123-143 (RNRRKRKGSDDDGGDSPVQDI) are disordered. Residues 130–220 (GSDDDGGDSP…SDLKVDSGVH (91 aa)) are interaction with SIN3A. Phosphoserine occurs at positions 131 and 138. Thr-145 is modified (phosphothreonine). Residues Lys-194, Lys-205, and Lys-214 each participate in a glycyl lysine isopeptide (Lys-Gly) (interchain with G-Cter in SUMO2) cross-link.

This sequence belongs to the SAP30 family. Component of the histone deacetylase complex that includes at least SIN3A, HDAC1 and HDAC2. Found in a complex composed of at least SINHCAF, SIN3A, HDAC1, SAP30, RBBP4, OGT and TET1. Interacts with HDAC1. Interacts with SIN3A, SIN3B, HDAC2, RBBP4 and NCOR1. Interacts with SAMSN1. Interacts with HCFC1. Interacts with SAP30BP. As to expression, expressed in all tissues tested with highest levels in pancreas, ovary, PBL, spleen and thymus; lowest levels in brain, placenta, lung and kidney.

It localises to the nucleus. Functionally, involved in the functional recruitment of the Sin3-histone deacetylase complex (HDAC) to a specific subset of N-CoR corepressor complexes. Capable of transcription repression by N-CoR. Active in deacetylating core histone octamers (when in a complex) but inactive in deacetylating nucleosomal histones. In terms of biological role, (Microbial infection) Involved in transcriptional repression of HHV-1 genes TK and gC. The sequence is that of Histone deacetylase complex subunit SAP30 from Homo sapiens (Human).